Here is a 579-residue protein sequence, read N- to C-terminus: Adenine deaminase (579 aa).

The protein belongs to the metallo-dependent hydrolases superfamily. Adenine deaminase family. Requires Mn(2+) as cofactor.

The catalysed reaction is adenine + H2O + H(+) = hypoxanthine + NH4(+). The polypeptide is Adenine deaminase (Listeria innocua serovar 6a (strain ATCC BAA-680 / CLIP 11262)).